A 1196-amino-acid chain; its full sequence is Protein BRASSINOSTEROID INSENSITIVE 1 (1196 aa).

The N-terminal stretch at 1–23 (MKTFSSFFLSVTTLFFFSFFSLS) is a signal peptide. The Cys pair 1 signature appears at 62–69 (CTFDGVTC). LRR repeat units follow at residues 71–98 (DDKVTSIDLSSKPLNVGFSAVSSSLLSL), 99–121 (TGLESLFLSNSHINGSVSGFKCS), 122–146 (ASLTSLDLSRNSLSGPVTTLTSLGS), 148–169 (SGLKFLNVSSNTLDFPGKVSGG), 172–197 (LNSLEVLDLSANSISGANVVGWVLSD), 199–221 (CGELKHLAISGNKISGDVDVSRC), 222–244 (VNLEFLDVSSNNFSTGIPFLGDC), 245–268 (SALQHLDISGNKLSGDFSRAISTC), 269–290 (TELKLLNISSNQFVGPIPPLPL), 291–314 (KSLQYLSLAENKFTGEIPDFLSGA), 316–338 (DTLTGLDLSGNHFYGAVPPFFGS), 339–363 (CSLLESLALSSNNFSGELPMDTLLK), 364–388 (MRGLKVLDLSFNEFSGELPESLTNL), 390–413 (ASLLTLDLSSNNFSGPILPNLCQN), 415–439 (KNTLQELYLQNNGFTGKIPPTLSNC), 441–463 (ELVSLHLSFNYLSGTIPSSLGSL), 464–487 (SKLRDLKLWLNMLEGEIPQELMYV), 488–511 (KTLETLILDFNDLTGEIPSGLSNC), 513–535 (NLNWISLSNNRLTGEIPKWIGRL), 536–559 (ENLAILKLSNNSFSGNIPAELGDC), and 561–583 (SLIWLDLNTNLFNGTIPAAMFKQ). N112 carries an N-linked (GlcNAc...) asparagine glycan. An N-linked (GlcNAc...) asparagine glycan is attached at N154. The N-linked (GlcNAc...) asparagine glycan is linked to N233. N275 is a glycosylation site (N-linked (GlcNAc...) asparagine). Residues N351, N387, N401, and N438 are each glycosylated (N-linked (GlcNAc...) asparagine). The N-linked (GlcNAc...) asparagine glycan is linked to N510. Residues N545 and N573 are each glycosylated (N-linked (GlcNAc...) asparagine). Brassinolide is bound at residue Y597. The N-linked (GlcNAc...) asparagine glycan is linked to N636. The tract at residues 640–642 (RVY) is SERK1 binding. 2 residues coordinate brassinolide: Y642 and S647. N653 carries an N-linked (GlcNAc...) asparagine glycan. 4 LRR repeats span residues 653 to 677 (NGSMMFLDMSYNMLSGYIPKEIGSM), 678 to 701 (PYLFILNLGHNDISGSIPDEVGDL), 702 to 725 (RGLNILDLSSNKLDGRIPQAMSAL), and 727 to 750 (MLTEIDLSNNNLSGPIPEMGQFET). A brassinolide-binding site is contributed by N705. The SERK1 binding stretch occupies residues 726 to 729 (TMLT). N737 is a glycosylation site (N-linked (GlcNAc...) asparagine). The segment at 746-750 (GQFET) is SERK1 binding. The Cys pair 2 signature appears at 763–770 (CGYPLPRC). A helical transmembrane segment spans residues 793–813 (AGSVAMGLLFSFVCIFGLILV). Residue Y831 is modified to Phosphotyrosine. S838 is modified (phosphoserine). T842, T846, and T851 each carry phosphothreonine. S858 is modified (phosphoserine). T872 and T880 each carry phosphothreonine. The Protein kinase domain occupies 883 to 1158 (FHNDSLIGSG…VQVMAMFKEI (276 aa)). S887 and S891 each carry phosphoserine. Residues 889 to 897 (IGSGGFGDV) and K911 contribute to the ATP site. Phosphotyrosine is present on Y956. ATP is bound by residues 957-959 (EFM) and 963-966 (SLED). The residue at position 981 (S981) is a Phosphoserine. T982 carries the post-translational modification Phosphothreonine. The active-site Proton acceptor is the D1009. Residues 1009–1014 (DMKSSN) and D1027 each bind ATP. At S1035 the chain carries Phosphoserine. T1039 carries the phosphothreonine modification. 2 positions are modified to phosphoserine: S1042 and S1044. T1045 and T1049 each carry phosphothreonine. Position 1052 is a phosphotyrosine (Y1052). S1060 carries the phosphoserine modification. Y1072 is modified (phosphotyrosine). S1166 and S1168 each carry phosphoserine. Position 1169 is a phosphothreonine (T1169). Phosphoserine is present on residues S1172 and S1179. Phosphothreonine is present on T1180. At S1187 the chain carries Phosphoserine.

It belongs to the protein kinase superfamily. Ser/Thr protein kinase family. In terms of assembly, monomer or homodimer in the plasma membrane. Heterodimer with BAK1 in the endosomes. Interacts with SERK1 and TTL in a kinase-dependent manner. Bind to SERK1 in a brassinolide-dependent manner. Component of the SERK1 signaling complex, composed of KAPP, CDC48A, GRF6 or GRF7, SERK1, SERK2, SERK3/BAK1 and BRI1. Interacts with CDG1. No interactions with PSKR1 or CNGC17. Interacts with BIK1. Interacts with B'ALPHA, B'BETA, B'GAMMA and B'ETA. Interacts with BSK1 and BSK3. Interacts with BSK5, BSK6 and BSK11. Post-translationally, autophosphorylated on Tyr-831, Tyr-956 and maybe Tyr-1072. Phosphorylated on at least 12 sites, with a preference for Ser residues. Transphosphorylated on Ser-887 by SERK1 and on Ser-838, Thr-846, Ser-858 and Ser-1166 by BAK1. Phosphorylation on Ser-1166 enhances the kinase activity. Glycosylated. In terms of tissue distribution, expressed ubiquitously.

Its subcellular location is the cell membrane. It is found in the endosome membrane. It catalyses the reaction L-seryl-[protein] + ATP = O-phospho-L-seryl-[protein] + ADP + H(+). The catalysed reaction is L-threonyl-[protein] + ATP = O-phospho-L-threonyl-[protein] + ADP + H(+). The enzyme catalyses L-tyrosyl-[protein] + ATP = O-phospho-L-tyrosyl-[protein] + ADP + H(+). With respect to regulation, activated by Ser and Thr phosphorylation. Receptor with a dual specificity kinase activity acting on both serine/threonine- and tyrosine-containing substrates. Regulates, in response to brassinosteroid binding, a signaling cascade involved in plant development, including expression of light- and stress-regulated genes, promotion of cell elongation, normal leaf and chloroplast senescence, and flowering. Binds brassinolide (BL), and less effectively castasterone (CS), but not 2,3,22,23-O-tetramethylbrassinolide or ecdysone. May be involved in a feedback regulation of brassinosteroid biosynthesis. Phosphorylates BRI1-associated receptor kinase 1 (BAK1), Transthyretin-Like protein (TTL) and SERK1 on 'Ser-299' and 'Thr-462' in vitro. May have a guanylyl cyclase activity. Phosphorylates BSK1, BSK2 and BSK3 in vitro. Phosphorylates BSK1, BSK3, BSK5, BSK6, BSK8 and BSK11 in vitro. In Arabidopsis thaliana (Mouse-ear cress), this protein is Protein BRASSINOSTEROID INSENSITIVE 1.